Here is a 214-residue protein sequence, read N- to C-terminus: Pyrrolidone-carboxylate peptidase (214 aa).

Residues glutamate 80, cysteine 143, and histidine 166 contribute to the active site.

This sequence belongs to the peptidase C15 family. In terms of assembly, homotetramer.

Its subcellular location is the cytoplasm. The catalysed reaction is Release of an N-terminal pyroglutamyl group from a polypeptide, the second amino acid generally not being Pro.. In terms of biological role, removes 5-oxoproline from various penultimate amino acid residues except L-proline. The polypeptide is Pyrrolidone-carboxylate peptidase (Escherichia fergusonii (strain ATCC 35469 / DSM 13698 / CCUG 18766 / IAM 14443 / JCM 21226 / LMG 7866 / NBRC 102419 / NCTC 12128 / CDC 0568-73)).